The following is a 367-amino-acid chain: Nociceptin receptor (367 aa).

The Extracellular portion of the chain corresponds to 1-45; the sequence is MESLFPAPFWEVLYGSHFQGNLSLLNETVPHHLLLNASHSAFLPL. N21, N26, and N36 each carry an N-linked (GlcNAc...) asparagine glycan. Residues 46 to 71 form a helical membrane-spanning segment; it reads GLKVTIVGLYLAVCIGGLLGNCLVMY. The Cytoplasmic portion of the chain corresponds to 72 to 84; the sequence is VILRHTKMKTATN. The chain crosses the membrane as a helical span at residues 85–106; that stretch reads IYIFNLALADTLVLLTLPFQGT. Topologically, residues 107–121 are extracellular; that stretch reads DILLGFWPFGNALCK. C120 and C197 are disulfide-bonded. A helical transmembrane segment spans residues 122–143; that stretch reads TVIAIDYYNMFTSTFTLTAMSV. The Cytoplasmic portion of the chain corresponds to 144–162; the sequence is DRYVAICHPIRALDVRTSS. The chain crosses the membrane as a helical span at residues 163-185; that stretch reads KAQAVNVAIWALASVVGVPVAIM. Residues 186–208 lie on the Extracellular side of the membrane; the sequence is GSAQVEDEEIECLVEIPAPQDYW. A helical membrane pass occupies residues 209 to 233; that stretch reads GPVFAICIFLFSFIIPVLIISVCYS. Topologically, residues 234-261 are cytoplasmic; it reads LMIRRLRGVRLLSGSREKDRNLRRITRL. Residues 262 to 282 traverse the membrane as a helical segment; the sequence is VLVVVAVFVGCWTPVQVFVLV. Residues 283–297 lie on the Extracellular side of the membrane; that stretch reads QGLGVQPGSETAVAI. Residues 298–319 form a helical membrane-spanning segment; sequence LRFCTALGYVNSCLNPILYAFL. The Cytoplasmic portion of the chain corresponds to 320 to 367; it reads DENFKACFRKFCCASALHREMQVSDRVRSIAKDVGLGCKTSETVPRPA. The S-palmitoyl cysteine moiety is linked to residue C331.

The protein belongs to the G-protein coupled receptor 1 family. In terms of processing, phosphorylation at Ser-360 requires GRK3. In the brain, isoform KOR3 and isoform KOR3C are most abundant in hypothalamus and periaqueductal gray. Isoform KOR3A is highly expressed in cortex, striatum and brainstem. Isoform KOR3D is highly expressed in cerebellum, hypothalamus and brainstem. Detected in spleen lymphocytes.

It is found in the cell membrane. It localises to the cytoplasmic vesicle. G-protein coupled opioid receptor that functions as a receptor for the endogenous neuropeptide nociceptin. Ligand binding causes a conformation change that triggers signaling via guanine nucleotide-binding proteins (G proteins) and modulates the activity of down-stream effectors. Signaling via G proteins mediates inhibition of adenylate cyclase activity and calcium channel activity. Arrestins modulate signaling via G proteins and mediate the activation of alternative signaling pathways that lead to the activation of MAP kinases. Plays a role in modulating nociception and the perception of pain. Plays a role in the regulation of locomotor activity by the neuropeptide nociceptin. In Mus musculus (Mouse), this protein is Nociceptin receptor (Oprl1).